We begin with the raw amino-acid sequence, 258 residues long: Small ribosomal subunit protein uS3 (258 aa).

One can recognise a KH type-2 domain in the interval 16-85 (IDEYLEKELE…NPQVEVKEVD (70 aa)). The interval 198–258 (RVTETPAEEA…KDADGEESEK (61 aa)) is disordered. A compositionally biased stretch (acidic residues) spans 203–245 (PAEEASEASEVVEDLEEVEDLEEIEDLEEVEDLEEVEDLEDTE).

The protein belongs to the universal ribosomal protein uS3 family. In terms of assembly, part of the 30S ribosomal subunit.

Binds the lower part of the 30S subunit head. The protein is Small ribosomal subunit protein uS3 of Methanothermobacter thermautotrophicus (strain ATCC 29096 / DSM 1053 / JCM 10044 / NBRC 100330 / Delta H) (Methanobacterium thermoautotrophicum).